Consider the following 101-residue polypeptide: Small ribosomal subunit protein uS14 (101 aa).

This sequence belongs to the universal ribosomal protein uS14 family. As to quaternary structure, part of the 30S ribosomal subunit. Contacts proteins S3 and S10.

Functionally, binds 16S rRNA, required for the assembly of 30S particles and may also be responsible for determining the conformation of the 16S rRNA at the A site. This is Small ribosomal subunit protein uS14 from Shewanella piezotolerans (strain WP3 / JCM 13877).